Here is a 442-residue protein sequence, read N- to C-terminus: tRNA modification GTPase MnmE (442 aa).

The (6S)-5-formyl-5,6,7,8-tetrahydrofolate site is built by Arg-24, Glu-82, and Lys-120. Positions 217-367 constitute a TrmE-type G domain; it reads GLHIVITGEP…LISLIKEKAE (151 aa). GTP-binding positions include 227-232, 246-252, and 271-274; these read NVGKST, SEYAGTT, and DTAG. Mg(2+) contacts are provided by Ser-231 and Thr-252. Position 442 (Lys-442) interacts with (6S)-5-formyl-5,6,7,8-tetrahydrofolate.

The protein belongs to the TRAFAC class TrmE-Era-EngA-EngB-Septin-like GTPase superfamily. TrmE GTPase family. As to quaternary structure, homodimer. Heterotetramer of two MnmE and two MnmG subunits. It depends on K(+) as a cofactor.

It is found in the cytoplasm. Functionally, exhibits a very high intrinsic GTPase hydrolysis rate. Involved in the addition of a carboxymethylaminomethyl (cmnm) group at the wobble position (U34) of certain tRNAs, forming tRNA-cmnm(5)s(2)U34. The sequence is that of tRNA modification GTPase MnmE from Wolbachia sp. subsp. Drosophila simulans (strain wRi).